Consider the following 891-residue polypeptide: Shieldin complex subunit 2 (891 aa).

A sufficient for interaction with SHLD3 and MAD2L2 region spans residues 1-61; the sequence is MSQGSQVHIF…AGDQEFKNLE (61 aa). The segment at 1 to 542 is interaction with ASTE1; it reads MSQGSQVHIF…TYVSTKHSYL (542 aa). 3 disordered regions span residues 184–222, 260–294, and 333–357; these read MSTG…KASD, NMEA…NEQS, and NEEN…WSCK. Positions 192–222 are enriched in basic and acidic residues; it reads PTGHRERQSQESFSDTRCEPQSEGAVRKASD. 2 stretches are compositionally biased toward polar residues: residues 260-271 and 342-354; these read NMEAEPTGSQGV and LCSS…NRSW. Residues 695-866 form a mediates interaction with SHLD1 region; it reads KYSGVVLIKA…QQDFSLLDFC (172 aa).

Belongs to the SHLD2 family. In terms of assembly, component of the shieldin complex, consisting of SHLD1, SHLD2, SHLD3 and MAD2L2/REV7. Within the complex, SHLD2 forms a scaffold which interacts with a SHLD3-MAD2L2 subcomplex via its N-terminus, and with SHLD1 via its C-terminus. Interacts with TP53BP1. Interacts with RIF1. Interacts with ASTE1.

The protein localises to the chromosome. Its function is as follows. Component of the shieldin complex, which plays an important role in repair of DNA double-stranded breaks (DSBs). During G1 and S phase of the cell cycle, the complex functions downstream of TP53BP1 to promote non-homologous end joining (NHEJ) and suppress DNA end resection. Mediates various NHEJ-dependent processes including immunoglobulin class-switch recombination, and fusion of unprotected telomeres. The sequence is that of Shieldin complex subunit 2 from Mus musculus (Mouse).